Consider the following 312-residue polypeptide: tRNA-cytidine(32) 2-sulfurtransferase (312 aa).

The PP-loop motif signature appears at 39 to 44 (SGGKDS). The [4Fe-4S] cluster site is built by Cys114, Cys117, and Cys205.

It belongs to the TtcA family. As to quaternary structure, homodimer. The cofactor is Mg(2+). [4Fe-4S] cluster is required as a cofactor.

The protein localises to the cytoplasm. The enzyme catalyses cytidine(32) in tRNA + S-sulfanyl-L-cysteinyl-[cysteine desulfurase] + AH2 + ATP = 2-thiocytidine(32) in tRNA + L-cysteinyl-[cysteine desulfurase] + A + AMP + diphosphate + H(+). It participates in tRNA modification. Catalyzes the ATP-dependent 2-thiolation of cytidine in position 32 of tRNA, to form 2-thiocytidine (s(2)C32). The sulfur atoms are provided by the cysteine/cysteine desulfurase (IscS) system. This chain is tRNA-cytidine(32) 2-sulfurtransferase, found in Ralstonia nicotianae (strain ATCC BAA-1114 / GMI1000) (Ralstonia solanacearum).